The primary structure comprises 273 residues: Pre-mRNA-splicing factor CWC23 (273 aa).

The 73-residue stretch at 15–87 (DLYALLEVSI…SLRATYNRWL (73 aa)) folds into the J domain.

Belongs to the DnaJ family. Associated with the spliceosome.

It localises to the cytoplasm. Its subcellular location is the nucleus. Its function is as follows. Involved in pre-mRNA splicing. May be involved in endoplasmic reticulum-associated protein degradation (ERAD) and required for growth at low and high temperatures. The sequence is that of Pre-mRNA-splicing factor CWC23 (CWC23) from Eremothecium gossypii (strain ATCC 10895 / CBS 109.51 / FGSC 9923 / NRRL Y-1056) (Yeast).